Reading from the N-terminus, the 115-residue chain is Large ribosomal subunit protein bL20c (115 aa).

Belongs to the bacterial ribosomal protein bL20 family.

The protein localises to the plastid. It localises to the chloroplast. Binds directly to 23S ribosomal RNA and is necessary for the in vitro assembly process of the 50S ribosomal subunit. It is not involved in the protein synthesizing functions of that subunit. The protein is Large ribosomal subunit protein bL20c of Chlorokybus atmophyticus (Soil alga).